The chain runs to 711 residues: Ecdysone-inducible protein E75 (711 aa).

The segment at residues 44-120 (TVLCRVCGDK…VGMSRDAVRF (77 aa)) is a DNA-binding region (nuclear receptor). NR C4-type zinc fingers lie at residues 47–67 (CRVC…CEGC) and 84–108 (CTKN…LKKC). Residues 153–400 (DGPRLLARVV…QQMWVEDEGA (248 aa)) enclose the NR LBD domain. 4 disordered regions span residues 405-432 (SGAD…DCGT), 466-530 (LTVT…DMPV), 559-602 (AMRR…PIRA), and 680-711 (DAPQ…MLPA). Basic and acidic residues-rich tracts occupy residues 511 to 521 (SLEEHSDDRRP) and 560 to 572 (MRRD…EARP). Positions 574–590 (RPTPSPQPPHHPHPASP) are enriched in pro residues. Low complexity-rich tracts occupy residues 591-602 (AHPAHSPRPIRA) and 682-692 (PQPLNLSKKSP). Positions 693-711 (SPSPPPPPPRSYMPPMLPA) are enriched in pro residues.

Belongs to the nuclear hormone receptor family. NR1 subfamily.

Its subcellular location is the nucleus. Functionally, orphan receptor possibly involved in the regulation of genes in the ecdysteroid cascade. The chain is Ecdysone-inducible protein E75 (E75) from Galleria mellonella (Greater wax moth).